The primary structure comprises 63 residues: Large ribosomal subunit protein bL35 (63 aa).

A compositionally biased stretch (basic residues) spans 1–43 (MKMRTHSGAKKRLKVLSSGKVKKKSTRMRHLNSHMSSKTKRQL). A disordered region spans residues 1 to 45 (MKMRTHSGAKKRLKVLSSGKVKKKSTRMRHLNSHMSSKTKRQLGK).

This sequence belongs to the bacterial ribosomal protein bL35 family.

The chain is Large ribosomal subunit protein bL35 from Bdellovibrio bacteriovorus (strain ATCC 15356 / DSM 50701 / NCIMB 9529 / HD100).